The chain runs to 329 residues: Oligopeptide transport ATP-binding protein AppF (329 aa).

Residues 10-261 enclose the ABC transporter domain; the sequence is LELRDVKKYF…PLHPYTQALL (252 aa). Residue 53 to 60 participates in ATP binding; the sequence is GESGCGKS.

It belongs to the ABC transporter superfamily.

Its subcellular location is the cell membrane. This protein is a component of an oligopeptide permease, a binding protein-dependent transport system. This APP system can completely substitute for the OPP system in both sporulation and genetic competence, though, unlike OPP, is incapable of transporting tripeptides. Probably responsible for energy coupling to the transport system. This chain is Oligopeptide transport ATP-binding protein AppF (appF), found in Bacillus subtilis (strain 168).